Consider the following 374-residue polypeptide: tRNA-specific 2-thiouridylase MnmA (374 aa).

ATP contacts are provided by residues 12–19 and Met38; that span reads GMSGGVDS. The interaction with target base in tRNA stretch occupies residues 98 to 100; it reads NPD. The active-site Nucleophile is Cys103. Cys103 and Cys202 form a disulfide bridge. Gly128 serves as a coordination point for ATP. An interaction with tRNA region spans residues 152 to 154; the sequence is KDQ. Cys202 functions as the Cysteine persulfide intermediate in the catalytic mechanism. Positions 316-317 are interaction with tRNA; that stretch reads RY.

It belongs to the MnmA/TRMU family.

Its subcellular location is the cytoplasm. It carries out the reaction S-sulfanyl-L-cysteinyl-[protein] + uridine(34) in tRNA + AH2 + ATP = 2-thiouridine(34) in tRNA + L-cysteinyl-[protein] + A + AMP + diphosphate + H(+). Catalyzes the 2-thiolation of uridine at the wobble position (U34) of tRNA, leading to the formation of s(2)U34. In Vibrio campbellii (strain ATCC BAA-1116), this protein is tRNA-specific 2-thiouridylase MnmA.